We begin with the raw amino-acid sequence, 473 residues long: Cysteine--tRNA ligase (473 aa).

Residue cysteine 28 coordinates Zn(2+). The short motif at 30–40 is the 'HIGH' region element; that stretch reads MTVYDYCHLGH. 3 residues coordinate Zn(2+): cysteine 209, histidine 234, and glutamate 238. Residues 282 to 286 carry the 'KMSKS' region motif; it reads KMSKS. ATP is bound at residue lysine 285.

It belongs to the class-I aminoacyl-tRNA synthetase family. In terms of assembly, monomer. Requires Zn(2+) as cofactor.

The protein localises to the cytoplasm. The catalysed reaction is tRNA(Cys) + L-cysteine + ATP = L-cysteinyl-tRNA(Cys) + AMP + diphosphate. This is Cysteine--tRNA ligase from Neisseria meningitidis serogroup B (strain ATCC BAA-335 / MC58).